Consider the following 327-residue polypeptide: Lipoyl synthase (327 aa).

The [4Fe-4S] cluster site is built by Cys72, Cys77, Cys83, Cys98, Cys102, Cys105, and Ser313. The region spanning 83 to 302 (CWSHGTATIM…RKVGLEKGFL (220 aa)) is the Radical SAM core domain.

Belongs to the radical SAM superfamily. Lipoyl synthase family. It depends on [4Fe-4S] cluster as a cofactor.

The protein resides in the cytoplasm. It carries out the reaction [[Fe-S] cluster scaffold protein carrying a second [4Fe-4S](2+) cluster] + N(6)-octanoyl-L-lysyl-[protein] + 2 oxidized [2Fe-2S]-[ferredoxin] + 2 S-adenosyl-L-methionine + 4 H(+) = [[Fe-S] cluster scaffold protein] + N(6)-[(R)-dihydrolipoyl]-L-lysyl-[protein] + 4 Fe(3+) + 2 hydrogen sulfide + 2 5'-deoxyadenosine + 2 L-methionine + 2 reduced [2Fe-2S]-[ferredoxin]. It functions in the pathway protein modification; protein lipoylation via endogenous pathway; protein N(6)-(lipoyl)lysine from octanoyl-[acyl-carrier-protein]: step 2/2. Functionally, catalyzes the radical-mediated insertion of two sulfur atoms into the C-6 and C-8 positions of the octanoyl moiety bound to the lipoyl domains of lipoate-dependent enzymes, thereby converting the octanoylated domains into lipoylated derivatives. The chain is Lipoyl synthase from Francisella tularensis subsp. mediasiatica (strain FSC147).